The chain runs to 186 residues: Apolipophorin-3 (186 aa).

The N-terminal stretch at 1 to 18 (MAAKYVFVVAACSALAQA) is a signal peptide. The propeptide occupies 19 to 23 (GIVRR).

The protein belongs to the insect apolipophorin-3 family. In terms of assembly, equilibrium between a soluble monomer and a bound lipoprotein form. Apolipophorin-3 associates with lipophorin during lipid loading until each particle contains 9 or 14 molecules of apolipophorin-3. In terms of tissue distribution, expressed in hemolymph. Also found in hemocytes and fat body.

It localises to the secreted. Its function is as follows. Assists in the loading of diacylglycerol, generated from triacylglycerol stores in the fat body through the action of adipokinetic hormone, into lipophorin, the hemolymph lipoprotein. It increases the lipid carrying capacity of lipophorin by covering the expanding hydrophobic surface resulting from diacylglycerol uptake. It thus plays a critical role in the transport of lipids during flight in several species of insects. Has antibacterial activity against the Gram-positive bacteria L.monocytogenes (MIC=6.5 uM). Lacks antibacterial activity against the Gram-positive bacteria B.circulans, M.luteus, S.aureus, and S.lutea, and the Gram-negative bacteria E.coli D31, E.coli ATCC 25922, and S.typhimurium. Lacks antifungal activity against S.cerevisiae, P.pastoris, Z.marxianus, C.albicans, C.wickerhamii, A.niger, F.oxysporum, and T.harizianum. The chain is Apolipophorin-3 from Galleria mellonella (Greater wax moth).